The sequence spans 496 residues: Probable cytosol aminopeptidase (496 aa).

Residues Lys-264 and Asp-269 each contribute to the Mn(2+) site. The active site involves Lys-276. Positions 287, 346, and 348 each coordinate Mn(2+). The active site involves Arg-350.

The protein belongs to the peptidase M17 family. The cofactor is Mn(2+).

The protein localises to the cytoplasm. It catalyses the reaction Release of an N-terminal amino acid, Xaa-|-Yaa-, in which Xaa is preferably Leu, but may be other amino acids including Pro although not Arg or Lys, and Yaa may be Pro. Amino acid amides and methyl esters are also readily hydrolyzed, but rates on arylamides are exceedingly low.. The catalysed reaction is Release of an N-terminal amino acid, preferentially leucine, but not glutamic or aspartic acids.. Functionally, presumably involved in the processing and regular turnover of intracellular proteins. Catalyzes the removal of unsubstituted N-terminal amino acids from various peptides. The chain is Probable cytosol aminopeptidase from Geobacter sulfurreducens (strain ATCC 51573 / DSM 12127 / PCA).